The sequence spans 184 residues: ATP-dependent protease subunit HslV (184 aa).

The active site involves Thr12. Na(+) contacts are provided by Ala166, Cys169, and Thr172.

This sequence belongs to the peptidase T1B family. HslV subfamily. As to quaternary structure, a double ring-shaped homohexamer of HslV is capped on each side by a ring-shaped HslU homohexamer. The assembly of the HslU/HslV complex is dependent on binding of ATP.

Its subcellular location is the cytoplasm. The enzyme catalyses ATP-dependent cleavage of peptide bonds with broad specificity.. With respect to regulation, allosterically activated by HslU binding. Its function is as follows. Protease subunit of a proteasome-like degradation complex believed to be a general protein degrading machinery. The sequence is that of ATP-dependent protease subunit HslV from Nitrobacter winogradskyi (strain ATCC 25391 / DSM 10237 / CIP 104748 / NCIMB 11846 / Nb-255).